The sequence spans 545 residues: CTP synthase (545 aa).

The interval 1-264 (MQYIVVTGGV…ITRLSKLLNM (264 aa)) is amidoligase domain. Residue Ser12 participates in CTP binding. Ser12 serves as a coordination point for UTP. Residue 13-18 (GLGKGT) participates in ATP binding. Tyr53 contributes to the L-glutamine binding site. Asp70 serves as a coordination point for ATP. 2 residues coordinate Mg(2+): Asp70 and Glu140. Residues 147 to 149 (DIE), 185 to 190 (KTKPTQ), and Arg221 each bind CTP. UTP contacts are provided by residues 185–190 (KTKPTQ) and Arg221. Positions 294–527 (YVDLHDAYIS…VEQALIFKHR (234 aa)) constitute a Glutamine amidotransferase type-1 domain. An L-glutamine-binding site is contributed by Gly347. Catalysis depends on Cys374, which acts as the Nucleophile; for glutamine hydrolysis. L-glutamine contacts are provided by residues 375 to 378 (LGFQ), Glu398, and Arg455. Residues His500 and Glu502 contribute to the active site.

Belongs to the CTP synthase family. As to quaternary structure, homotetramer.

It catalyses the reaction UTP + L-glutamine + ATP + H2O = CTP + L-glutamate + ADP + phosphate + 2 H(+). The catalysed reaction is L-glutamine + H2O = L-glutamate + NH4(+). It carries out the reaction UTP + NH4(+) + ATP = CTP + ADP + phosphate + 2 H(+). It participates in pyrimidine metabolism; CTP biosynthesis via de novo pathway; CTP from UDP: step 2/2. Its activity is regulated as follows. Allosterically activated by GTP, when glutamine is the substrate; GTP has no effect on the reaction when ammonia is the substrate. The allosteric effector GTP functions by stabilizing the protein conformation that binds the tetrahedral intermediate(s) formed during glutamine hydrolysis. Inhibited by the product CTP, via allosteric rather than competitive inhibition. Catalyzes the ATP-dependent amination of UTP to CTP with either L-glutamine or ammonia as the source of nitrogen. Regulates intracellular CTP levels through interactions with the four ribonucleotide triphosphates. This Thermoplasma acidophilum (strain ATCC 25905 / DSM 1728 / JCM 9062 / NBRC 15155 / AMRC-C165) protein is CTP synthase.